Reading from the N-terminus, the 162-residue chain is Succinate dehydrogenase assembly factor 2, mitochondrial (162 aa).

The transit peptide at 1–35 (MHNMFPALTKTLSLQGYKIINSQTGSAAWSCGRRW) directs the protein to the mitochondrion.

The protein belongs to the SDHAF2 family. In terms of assembly, interacts with SDH1 within the SDH catalytic dimer.

It localises to the mitochondrion matrix. Functionally, plays an essential role in the assembly of succinate dehydrogenase (SDH), an enzyme complex (also referred to as respiratory complex II) that is a component of both the tricarboxylic acid (TCA) cycle and the mitochondrial electron transport chain, and which couples the oxidation of succinate to fumarate with the reduction of ubiquinone (coenzyme Q) to ubiquinol. Required for flavinylation (covalent attachment of FAD) of the flavoprotein subunit SDH1 of the SDH catalytic dimer. It is unclear whether it participates in the chemistry of FAD attachment (enzymatic function) or acts as a chaperone that maintains SDH1 in a conformation that is susceptible to autocatalytic FAD attachment. Does not bind FAD or FADH(2) in vitro. Involved in sporulation. Required for the full activation of the early meiotic inducer IME1. The protein is Succinate dehydrogenase assembly factor 2, mitochondrial of Saccharomyces cerevisiae (strain ATCC 204508 / S288c) (Baker's yeast).